Here is a 1012-residue protein sequence, read N- to C-terminus: MDSVSFFNPYLEANRLKKKSRSSYIRILPRGIMHDGAAGLIKDVCDSEPRMFYRDRQYLLSKEMTWPSLDRVRSKDYDHTRMKFHIYDAVETLMFTDSIENLPFQYRHFVIPSGTVIRMFGRSEDGEKICVNVFGQEQYFYCECVDGKSLKATINNLMLTGEVKMSCSFVIEPADKLSLYGYNANTVVNLFKVSFGNFYVSQRIGKILQNEGFVVYEIDVDVLTRFFVDNGFLSFGWYNVKKYIPQDMGKGSNLEVEINCHVSDLVSLENVNWPLYGCWSFDIECLGQNGNFPDAENLGDIVIQISVVSFDTEGDRDERHLFTLGTCEQIDGVHIYEFASEFELLLGFFIFLRIESPEFITGYNINNFDLKYLCIRMDKIYHYEIGCFSKLKNGKIGISVPHEQYKKGFLQAQTKVFTSGVLYLDMYPVYSSKITAQNYKLDTIAKICLQQEKEQLSYKEIPKKFISGPSGRAVVGKYCLQDSVLVVRLFKQINYHYEVAEVARLAHVTARCVVFEGQQKKIFPCILTEAKRRNMILPSMVSSHNRQGIGYKGATVLEPKTGYYAVPTVVFDFQSLYPSIMMAHNLCYSTLVLDERQIAGLSESDILTVKLGDETHRFVKPCVRESVLGSLLKDWLAKRREVKAEMQNCSDPMMKLLLDKKQLALKTTCNSVYGVTGAAHGLLPCVAIAASVTCLGREMLCSTVDYVNSKMQSEQFFCEELGLTASDFTGDLKVEVIYGDTDSIFMSVRNMANESLRRIAPMIAKHITDRLFKSPIKLEFEKILCPLILICKKRYIGRQDDSLLIFKGVDLVRKTSCDFVKGVVKDIVDLLFFDEEVQTAAVEFSHMTQTQLREQGVPVGIHKILRRLCKAREELFQNRADVRHLMLSSVLSKEVAAYKQPNLAHLSVIRRLAQRKEEIPNVGDRIMYVLIAPSTGNKQTHNYELAEDPNYVLEHKIPIHAEKYFDQIIKAVTNAISPIFPKTDIKKEKLLLYLLPMKVYLDETFSAIAEVM.

Belongs to the DNA polymerase type-B family.

It is found in the host nucleus. The catalysed reaction is DNA(n) + a 2'-deoxyribonucleoside 5'-triphosphate = DNA(n+1) + diphosphate. Replicates viral genomic DNA. This Human herpesvirus 6B (strain Z29) (HHV-6 variant B) protein is DNA polymerase catalytic subunit (U38).